A 334-amino-acid polypeptide reads, in one-letter code: Anthranilate phosphoribosyltransferase (334 aa).

5-phospho-alpha-D-ribose 1-diphosphate-binding positions include Gly81, 84 to 85 (GD), Thr89, 91 to 94 (NIST), 109 to 117 (KHGSRSVSS), and Ala121. Gly81 is a binding site for anthranilate. Ser93 is a Mg(2+) binding site. Arg167 is a binding site for anthranilate. The Mg(2+) site is built by Asp225 and Glu226.

This sequence belongs to the anthranilate phosphoribosyltransferase family. As to quaternary structure, homodimer. Mg(2+) serves as cofactor.

It carries out the reaction N-(5-phospho-beta-D-ribosyl)anthranilate + diphosphate = 5-phospho-alpha-D-ribose 1-diphosphate + anthranilate. It participates in amino-acid biosynthesis; L-tryptophan biosynthesis; L-tryptophan from chorismate: step 2/5. Functionally, catalyzes the transfer of the phosphoribosyl group of 5-phosphorylribose-1-pyrophosphate (PRPP) to anthranilate to yield N-(5'-phosphoribosyl)-anthranilate (PRA). This Actinobacillus pleuropneumoniae serotype 7 (strain AP76) protein is Anthranilate phosphoribosyltransferase.